Reading from the N-terminus, the 261-residue chain is MRIALGIEYDGAAYYGWQRQKEVISVQQELEQSLSKIANHTVRVHCAGRTDSGVHSTGQVVHFETEAIRKDVAWTLGVNANLPKDIAVRWVKQVDSSFHARFSATARHYRYIIYNGAFRPGILGTGLSHYHMDLDVQKMHLAGQMLLGEQDFTSFRALHCQASSPVKCIEYLNISQRSQFIIIDIKANAFLHHMVRNIAGSLIEIGCGKQPVDWLKTLLAYKDRSKAAATAKPGGLYLVEVDYPSQYDLPRPPCGPLFLEL.

Catalysis depends on Asp-51, which acts as the Nucleophile. A substrate-binding site is contributed by Tyr-109.

Belongs to the tRNA pseudouridine synthase TruA family. Homodimer.

It catalyses the reaction uridine(38/39/40) in tRNA = pseudouridine(38/39/40) in tRNA. In terms of biological role, formation of pseudouridine at positions 38, 39 and 40 in the anticodon stem and loop of transfer RNAs. The protein is tRNA pseudouridine synthase A of Psychromonas ingrahamii (strain DSM 17664 / CCUG 51855 / 37).